A 395-amino-acid polypeptide reads, in one-letter code: RNA pseudouridine synthase 7 (395 aa).

The disordered stretch occupies residues 1–21 (MKRKQQEDDNDDGVEKAVSPV). The S4 RNA-binding domain maps to 74–136 (KTIVDLFADE…HEPPVMIDDV (63 aa)). Residue D187 is part of the active site. Over residues 244–255 (EGRSTAEDANSS) the composition is skewed to polar residues. The segment at 244–263 (EGRSTAEDANSSGDDKKVKG) is disordered.

The protein belongs to the pseudouridine synthase RluA family.

The catalysed reaction is a uridine in RNA = a pseudouridine in RNA. This chain is RNA pseudouridine synthase 7, found in Arabidopsis thaliana (Mouse-ear cress).